A 696-amino-acid polypeptide reads, in one-letter code: Rho-related BTB domain-containing protein 1 (696 aa).

The interval 1–210 is rho-like; the sequence is MDADMDYERP…DNAIRAALIS (210 aa). GTP contacts are provided by residues 21–28, 84–88, and 140–143; these read GDNAVGKT, DTFGD, and CQLD. 2 consecutive BTB domains span residues 266 to 427 and 485 to 552; these read ADVL…DEKE and SDVT…SPNL. Residues 327–348 form a disordered region; that stretch reads VDPEEEREEGPPRIPQADQWKS.

Belongs to the small GTPase superfamily. Rho family. In terms of tissue distribution, ubiquitous, with highest levels in skeletal muscle, placenta, testis, stomach, and kidney, followed by uterus and adrenal gland. Expressed in a variety of fetal tissues.

The polypeptide is Rho-related BTB domain-containing protein 1 (RHOBTB1) (Homo sapiens (Human)).